The following is a 113-amino-acid chain: UPF0145 protein TK1926 (113 aa).

It belongs to the UPF0145 family.

The chain is UPF0145 protein TK1926 from Thermococcus kodakarensis (strain ATCC BAA-918 / JCM 12380 / KOD1) (Pyrococcus kodakaraensis (strain KOD1)).